We begin with the raw amino-acid sequence, 316 residues long: tRNA dimethylallyltransferase (316 aa).

17–24 (GPTASGKT) serves as a coordination point for ATP. Substrate is bound at residue 19–24 (TASGKT). 4 interaction with substrate tRNA regions span residues 42-45 (DSAL), 166-170 (QRLSR), 247-252 (RCVGYR), and 280-287 (KRQITWLR).

The protein belongs to the IPP transferase family. Monomer. Mg(2+) serves as cofactor.

The enzyme catalyses adenosine(37) in tRNA + dimethylallyl diphosphate = N(6)-dimethylallyladenosine(37) in tRNA + diphosphate. Its function is as follows. Catalyzes the transfer of a dimethylallyl group onto the adenine at position 37 in tRNAs that read codons beginning with uridine, leading to the formation of N6-(dimethylallyl)adenosine (i(6)A). The chain is tRNA dimethylallyltransferase from Escherichia coli O45:K1 (strain S88 / ExPEC).